Consider the following 311-residue polypeptide: GTPase Era (311 aa).

An Era-type G domain is found at 16-188; that stretch reads HAGFVAIVGK…REQLLEVLPE (173 aa). A G1 region spans residues 24 to 31; sequence GKPNVGKS. 24 to 31 is a binding site for GTP; sequence GKPNVGKS. A G2 region spans residues 50-54; that stretch reads QTTRR. Residues 71 to 74 are G3; the sequence is DTPG. GTP is bound by residues 71–75 and 133–136; these read DTPGL and NKTD. Positions 133 to 136 are G4; it reads NKTD. Residues 166–168 form a G5 region; the sequence is LSA. The region spanning 219 to 296 is the KH type-2 domain; sequence LRDELPYAVA…YLGLEVIVIP (78 aa).

The protein belongs to the TRAFAC class TrmE-Era-EngA-EngB-Septin-like GTPase superfamily. Era GTPase family. Monomer.

Its subcellular location is the cytoplasm. The protein localises to the cell membrane. An essential GTPase that binds both GDP and GTP, with rapid nucleotide exchange. Plays a role in 16S rRNA processing and 30S ribosomal subunit biogenesis and possibly also in cell cycle regulation and energy metabolism. The protein is GTPase Era of Deinococcus radiodurans (strain ATCC 13939 / DSM 20539 / JCM 16871 / CCUG 27074 / LMG 4051 / NBRC 15346 / NCIMB 9279 / VKM B-1422 / R1).